Reading from the N-terminus, the 336-residue chain is Glycerol-3-phosphate dehydrogenase [NAD(P)+] (336 aa).

4 residues coordinate NADPH: serine 16, tyrosine 17, histidine 37, and lysine 111. 3 residues coordinate sn-glycerol 3-phosphate: lysine 111, glycine 140, and threonine 142. Alanine 144 is an NADPH binding site. Positions 196, 249, 259, 260, and 261 each coordinate sn-glycerol 3-phosphate. The active-site Proton acceptor is the lysine 196. Arginine 260 is an NADPH binding site. Residues valine 284 and glutamate 286 each coordinate NADPH.

The protein belongs to the NAD-dependent glycerol-3-phosphate dehydrogenase family.

The protein localises to the cytoplasm. The catalysed reaction is sn-glycerol 3-phosphate + NAD(+) = dihydroxyacetone phosphate + NADH + H(+). The enzyme catalyses sn-glycerol 3-phosphate + NADP(+) = dihydroxyacetone phosphate + NADPH + H(+). It participates in membrane lipid metabolism; glycerophospholipid metabolism. Functionally, catalyzes the reduction of the glycolytic intermediate dihydroxyacetone phosphate (DHAP) to sn-glycerol 3-phosphate (G3P), the key precursor for phospholipid synthesis. The chain is Glycerol-3-phosphate dehydrogenase [NAD(P)+] from Glaesserella parasuis serovar 5 (strain SH0165) (Haemophilus parasuis).